A 162-amino-acid polypeptide reads, in one-letter code: MVSGRGLVVTAKMLNAKKKELQDLLDVRIPENSREIGRALELGDLRENAEYKAAREEQTRLNNMVTRLQEEIERAQVFDPTTVVAGRVSFGTVISLKNHTSGEDETYTILGPWESAPERGIISYMSPLGSNLLNRKTGEQLAFTVGEHEKVYEILSISAAEI.

A coiled-coil region spans residues 46–77 (RENAEYKAAREEQTRLNNMVTRLQEEIERAQV).

The protein belongs to the GreA/GreB family.

Its function is as follows. Necessary for efficient RNA polymerase transcription elongation past template-encoded arresting sites. The arresting sites in DNA have the property of trapping a certain fraction of elongating RNA polymerases that pass through, resulting in locked ternary complexes. Cleavage of the nascent transcript by cleavage factors such as GreA or GreB allows the resumption of elongation from the new 3'terminus. GreA releases sequences of 2 to 3 nucleotides. In Treponema pallidum (strain Nichols), this protein is Transcription elongation factor GreA.